Consider the following 834-residue polypeptide: Pentatricopeptide repeat-containing protein At4g39530 (834 aa).

19 PPR repeats span residues 78–112 (DTYL…NLVS), 113–144 (WSTM…KDSP), 145–181 (NEYI…GFDR), 182–212 (DVYV…LPEK), 213–247 (STVT…NVVP), 248–282 (DGYI…GLEM), 283–313 (DASL…MPNK), 314–348 (NIIS…GLKP), 349–383 (DMYA…NLGN), 384–414 (DSYV…FAAA), 415–452 (DVVL…LIRP), 453–487 (SLLT…GLNL), 488–518 (DIFA…MKVK), 519–553 (DLVI…RERP), 554–588 (DEFT…GLEC), 589–619 (NPYI…AASR), 620–654 (DVVC…GIEP), 655–689 (NYIT…GIEP), and 690–720 (ETEH…MPTK). The type E motif stretch occupies residues 725–800 (VWRSLLSGCA…EPGRSWIGIN (76 aa)). The type E(+) motif stretch occupies residues 801-831 (KEVHIFLSKDKSHCKANQIYEVLDDLLVQIR).

This sequence belongs to the PPR family. PCMP-E subfamily.

The chain is Pentatricopeptide repeat-containing protein At4g39530 (PCMP-E52) from Arabidopsis thaliana (Mouse-ear cress).